The sequence spans 1383 residues: MTSYSFTEKKRIRKDFGKQRSILEVPFLLAIQVDSYREFLQEDVEPNKRKDLGLHAALKSVFPISSYSGNAALEYVGYKLGQPVFDERECRQRGMSYGAPLRVTVRLVIYDRESSTKAIKYVKEQEVYLGEIPLMTGNGTFIVNGTERVIVSQLHRSPGVFFDHDRGKTHSSGKLLYSARIIPYRGSWLDFEFDPKDALFTRIDRRRKLPVSILLRALGYSNEEMLAEFFEINTFHINPDEGVQLELVPERLRGETLNFDLADGDKVIVEAGKRITARHVKQLEAAGVAALAVPDDYLVGRILSHDVVDGSTGELLANANDEINEDQLAAFRKAGVDAVGTLWVNDLDRGPYLSNTLRIDPTKTQLEALVEIYRMMRPGEPPTKEAAQNLFHNLFFTFERYDLSTVGRMKFNRRVGRKDVLGESVLYDKKYFAERNDEESKRLVAEHADTSDILEVIKVLTEIRNGRGVVDDIDHLGNRRVRSVGEMAENVFRVGLVRVERAVKERLSMAESEGLTPQELINAKPVAAAIKEFFGSSQLSQFMDQNNPLSEVTHKRRVFALGPGGLTRERAGFEVRDVHPTHYGRVCTIETPEGPNIGLINSLAVFARTNQYGFLETPYRKVLDGKVSDDVEYLSAIEENEYVIAQANALTDAKNMLTEQFVPCRFQGESLLKPPSEVHFMDVSPMQTVSVAAALVPFLEHDDANRALMGANMQRQAVPTLRSQKPLVGTGIERAVARDSGVTVNALRGGVIEQIDAARIVVKVNEAEIGGGTDAGVDIYNLIKYTRSNQNTCINQRPLVNVGDVIARGDVLADGPSTDIGELALGQNMLIAFMPWNGYNFEDSILLSERVVEEDRYTTIHIEELTCVARDTKLGPEEISADIPNVSEQALNRLDESGVVYIGAEVRAGDIMVGKVTPKGESQLTPEEKLLRAIFGEKASDVKDSSLRVPPGMDGTVIDVQVFTRDGIEKDKRARQIEENEIKRVKKDFDDQFRILEAAIYARLRSQIVGKVANGGANLKKGDTVTDAYLDGLKKSDWFQLRMKDEDAADAIERAQKQIQAHEKEFEARFADKRGKITQGDDLAPGVLKMVKVFLAVKRRIQPGDKMAGRHGNKGVVSNVVPVEDMPYMATGESVDIVLNPLGVPSRMNIGQILEVHLGWAAKGLGRKIQRMLEAQAAVSELRKFLNDIYNHDNAINAQRVDLSQFSDEELLNLGKNLIDGVPMATPVFDGASEAEIKRMLELADLPQSGQTQLYDGRTGEAFDRKTTVGYMHYLKLNHLVDDKMHARSTGPYSLVTQQPLGGKAQFGGQRFGEMEVWALEAYGAAYTLQEMLTVKSDDVQGRNQMYKNIVDGEHEMVAGMPESFNVLVKEIRSLAINMELEE.

The protein belongs to the RNA polymerase beta chain family. In terms of assembly, the RNAP catalytic core consists of 2 alpha, 1 beta, 1 beta' and 1 omega subunit. When a sigma factor is associated with the core the holoenzyme is formed, which can initiate transcription.

The catalysed reaction is RNA(n) + a ribonucleoside 5'-triphosphate = RNA(n+1) + diphosphate. Its function is as follows. DNA-dependent RNA polymerase catalyzes the transcription of DNA into RNA using the four ribonucleoside triphosphates as substrates. This is DNA-directed RNA polymerase subunit beta from Xanthomonas euvesicatoria pv. vesicatoria (strain 85-10) (Xanthomonas campestris pv. vesicatoria).